A 122-amino-acid chain; its full sequence is Large ribosomal subunit protein uL14 (122 aa).

This sequence belongs to the universal ribosomal protein uL14 family. Part of the 50S ribosomal subunit. Forms a cluster with proteins L3 and L19. In the 70S ribosome, L14 and L19 interact and together make contacts with the 16S rRNA in bridges B5 and B8.

Binds to 23S rRNA. Forms part of two intersubunit bridges in the 70S ribosome. This chain is Large ribosomal subunit protein uL14, found in Kineococcus radiotolerans (strain ATCC BAA-149 / DSM 14245 / SRS30216).